A 327-amino-acid chain; its full sequence is GTPase Obg (327 aa).

Positions 2–160 (HTFKDSLNIT…LDLRLELVLI (159 aa)) constitute an Obg domain. One can recognise an OBG-type G domain in the interval 161–326 (ADIGLVGLPN…LVNELFALSR (166 aa)). Residues 167 to 174 (GLPNAGKS), 192 to 196 (FTTKV), 213 to 216 (DVPG), 280 to 283 (NKLD), and 307 to 309 (SIY) contribute to the GTP site. Mg(2+) is bound by residues serine 174 and threonine 194.

The protein belongs to the TRAFAC class OBG-HflX-like GTPase superfamily. OBG GTPase family. Monomer. Mg(2+) is required as a cofactor.

It is found in the cytoplasm. Functionally, an essential GTPase which binds GTP, GDP and possibly (p)ppGpp with moderate affinity, with high nucleotide exchange rates and a fairly low GTP hydrolysis rate. Plays a role in control of the cell cycle, stress response, ribosome biogenesis and in those bacteria that undergo differentiation, in morphogenesis control. This chain is GTPase Obg, found in Borrelia turicatae (strain 91E135).